The sequence spans 251 residues: D-aminoacyl-tRNA deacylase (251 aa).

It belongs to the DtdA deacylase family. As to quaternary structure, monomer. The cofactor is Zn(2+).

The catalysed reaction is a D-aminoacyl-tRNA + H2O = a tRNA + a D-alpha-amino acid + H(+). It catalyses the reaction glycyl-tRNA(Ala) + H2O = tRNA(Ala) + glycine + H(+). D-aminoacyl-tRNA deacylase with broad substrate specificity. By recycling D-aminoacyl-tRNA to D-amino acids and free tRNA molecules, this enzyme counteracts the toxicity associated with the formation of D-aminoacyl-tRNA entities in vivo. This Pyrobaculum aerophilum (strain ATCC 51768 / DSM 7523 / JCM 9630 / CIP 104966 / NBRC 100827 / IM2) protein is D-aminoacyl-tRNA deacylase.